Reading from the N-terminus, the 318-residue chain is UPF0725 protein At3g44770 (318 aa).

Belongs to the UPF0725 (EMB2204) family.

The polypeptide is UPF0725 protein At3g44770 (Arabidopsis thaliana (Mouse-ear cress)).